The following is a 962-amino-acid chain: Translation initiation factor IF-2 (962 aa).

A compositionally biased stretch (basic and acidic residues) spans 52–77 (RSHGQADDSSRKKITLTKRETSEIRQ). Disordered stretches follow at residues 52-87 (RSHG…TRTV) and 121-378 (AVEE…EPVV). A compositionally biased stretch (polar residues) spans 78-87 (SDGTGKTRTV). Composition is skewed to basic and acidic residues over residues 123–183 (EEAR…KAEE), 197–250 (DSSR…EAEA), and 267–278 (PSERKAEEKKAE). A compositionally biased stretch (gly residues) spans 342–355 (TSGGVGGWRGGPRG). Residues 462–631 (PRPPVVTVMG…LLQAEVLELT (170 aa)) enclose the tr-type G domain. A G1 region spans residues 471–478 (GHVDHGKT). Residue 471-478 (GHVDHGKT) coordinates GTP. Positions 496-500 (GITQH) are G2. The tract at residues 517–520 (DTPG) is G3. GTP contacts are provided by residues 517 to 521 (DTPGH) and 571 to 574 (NKID). Positions 571–574 (NKID) are G4. Residues 607–609 (SAK) form a G5 region.

The protein belongs to the TRAFAC class translation factor GTPase superfamily. Classic translation factor GTPase family. IF-2 subfamily.

Its subcellular location is the cytoplasm. One of the essential components for the initiation of protein synthesis. Protects formylmethionyl-tRNA from spontaneous hydrolysis and promotes its binding to the 30S ribosomal subunits. Also involved in the hydrolysis of GTP during the formation of the 70S ribosomal complex. This chain is Translation initiation factor IF-2, found in Cupriavidus necator (strain ATCC 17699 / DSM 428 / KCTC 22496 / NCIMB 10442 / H16 / Stanier 337) (Ralstonia eutropha).